The sequence spans 338 residues: Lipoate-protein ligase A (338 aa).

One can recognise a BPL/LPL catalytic domain in the interval 29-216; the sequence is PATQRVLFLW…AFFAHYGERV (188 aa). Residues R71, 76-79, and K134 each bind ATP; that span reads GAVF. K134 contacts (R)-lipoate.

Belongs to the LplA family. Monomer.

The protein resides in the cytoplasm. It carries out the reaction L-lysyl-[lipoyl-carrier protein] + (R)-lipoate + ATP = N(6)-[(R)-lipoyl]-L-lysyl-[lipoyl-carrier protein] + AMP + diphosphate + H(+). It participates in protein modification; protein lipoylation via exogenous pathway; protein N(6)-(lipoyl)lysine from lipoate: step 1/2. The protein operates within protein modification; protein lipoylation via exogenous pathway; protein N(6)-(lipoyl)lysine from lipoate: step 2/2. In terms of biological role, catalyzes both the ATP-dependent activation of exogenously supplied lipoate to lipoyl-AMP and the transfer of the activated lipoyl onto the lipoyl domains of lipoate-dependent enzymes. In Escherichia coli O6:H1 (strain CFT073 / ATCC 700928 / UPEC), this protein is Lipoate-protein ligase A.